The chain runs to 707 residues: E3 ubiquitin-protein ligase Praja-2 (707 aa).

Residues 1-10 (MSQYTEKEPS) are compositionally biased toward basic and acidic residues. 3 disordered regions span residues 1-32 (MSQYTEKEPSVMDQESSKAAWPKPAGGYQTIT), 72-120 (PKEN…PSIA), and 250-314 (QNGQ…VRPK). At Ser2 the chain carries N-acetylserine. Composition is skewed to polar residues over residues 74-83 (ENTSGSSSLD) and 109-119 (LNQSTESSPSI). The segment covering 257–276 (RSSEDGVVRKRRQDDTDQGR) has biased composition (basic and acidic residues). Over residues 293 to 308 (EQNTSDRANHHGSSPE) the composition is skewed to polar residues. Phosphoserine is present on residues Ser306 and Ser320. Ser339 is modified (phosphoserine; by PKA). 2 disordered regions span residues 379–405 (RVTQRETERNRVTSENGATASGRQESR) and 424–493 (EDSS…QTSL). Residues 381–390 (TQRETERNRV) are compositionally biased toward basic and acidic residues. Thr385 is subject to Phosphothreonine; by PKA. Positions 391 to 401 (TSENGATASGR) are enriched in polar residues. A Phosphoserine modification is found at Ser430. A compositionally biased stretch (acidic residues) spans 465-481 (NDPELQSDSSGPEEENQ). A compositionally biased stretch (polar residues) spans 482–491 (ELSLQEGEQT). An interaction with PRKAR1A, PRKAR2A and PRKAR2B region spans residues 530-707 (DGNNNLEDDS…PANDNAEEAP (178 aa)). The interval 549–569 (WSLFDGFADGLGVAEAISYVD) is mediates interaction with TBC1D31. The segment at 633–674 (CPICCSEYIKDDIATELPCHHFFHKPCVSIWLQKSGTCPVCR) adopts an RING-type; atypical zinc-finger fold. Positions 685-701 (SAAASSDPDPDASPAND) are enriched in low complexity. A disordered region spans residues 685–707 (SAAASSDPDPDASPANDNAEEAP).

As to quaternary structure, binds ubiquitin-conjugating enzymes (E2s). In vitro, interacts with the ubiquitin-conjugating enzyme, UBE2D2. The phosphorylated form interacts with PRKAR1A, PRKAR2A and PRKAR2B. Binds the catalytic subunits of cAMP-dependent protein kinase. Interacts with MFHAS1. Interacts with TBC1D31; the interaction is direct and recruits PJA2 to centrosomes.

The protein resides in the cytoplasm. The protein localises to the cell membrane. Its subcellular location is the endoplasmic reticulum membrane. It localises to the golgi apparatus membrane. It is found in the synapse. The protein resides in the postsynaptic density. The protein localises to the cytoskeleton. Its subcellular location is the microtubule organizing center. It localises to the centrosome. The catalysed reaction is S-ubiquitinyl-[E2 ubiquitin-conjugating enzyme]-L-cysteine + [acceptor protein]-L-lysine = [E2 ubiquitin-conjugating enzyme]-L-cysteine + N(6)-ubiquitinyl-[acceptor protein]-L-lysine.. Its pathway is protein modification; protein ubiquitination. In terms of biological role, has E2-dependent E3 ubiquitin-protein ligase activity. Responsible for ubiquitination of cAMP-dependent protein kinase type I and type II-alpha/beta regulatory subunits and for targeting them for proteasomal degradation. Essential for PKA-mediated long-term memory processes. Through the ubiquitination of MFHAS1, positively regulates the TLR2 signaling pathway that leads to the activation of the downstream p38 and JNK MAP kinases and promotes the polarization of macrophages toward the pro-inflammatory M1 phenotype. Plays a role in ciliogenesis by ubiquitinating OFD1. This Mus musculus (Mouse) protein is E3 ubiquitin-protein ligase Praja-2 (Pja2).